The sequence spans 339 residues: Putative NADP-dependent oxidoreductase YfmJ (339 aa).

NADP(+)-binding positions include 156–159 (GAVG), Lys182, Tyr198, Asn222, 244–250 (CGAISSY), 277–279 (FIV), and Asn327.

The protein belongs to the NADP-dependent oxidoreductase L4BD family.

Its function is as follows. Putative quinone oxidoreductase that may contribute to the degradation of aromatic compounds. The protein is Putative NADP-dependent oxidoreductase YfmJ (yfmJ) of Bacillus subtilis (strain 168).